The chain runs to 136 residues: DNA-directed RNA polymerase subunit omega (136 aa).

Belongs to the RNA polymerase subunit omega family. As to quaternary structure, the RNAP catalytic core consists of 2 alpha, 1 beta, 1 beta' and 1 omega subunit. When a sigma factor is associated with the core the holoenzyme is formed, which can initiate transcription.

The catalysed reaction is RNA(n) + a ribonucleoside 5'-triphosphate = RNA(n+1) + diphosphate. Functionally, promotes RNA polymerase assembly. Latches the N- and C-terminal regions of the beta' subunit thereby facilitating its interaction with the beta and alpha subunits. This is DNA-directed RNA polymerase subunit omega from Acidiphilium cryptum (strain JF-5).